The primary structure comprises 524 residues: MVPPRLHRGAGRPGGLSSLPPFGLGSARFAGIAFEDLREALATRLQMVYVFIMNRVNSQSSGFSQRRRMALGIVILLLVDVIWVASSELTSYVFTQYNKPFFSTFAKTSMFVLYLLGFIIWKPWRQQCTRGFRGKPAAFFADAEGYFAACTTDTSMSSSLSEPLYVPVKFHDLPSEKLESTNIGTEKTPKKSRVRFSNIMEIRQLPSSHALEAKLSRMSYPTVKDQESILKTVGKLTATQVAKISFFFCFVWFLANLSYQEALSDTQVAIVNILSSTSGLFTLILAAVFPSNSGDRFTLSKLLAVILSIGGVVLVNLSGSEKSAGRDTIGSIWSLAGAMFYAVYIVMIKRKVDREDKLDIPMFFGFVGLFNLLLLWPGFFLLHYTGFEDFEFPNKVVLLCIIINGLIGTVLSEFLWLWGCFLTSSLIGTLALSLTIPLSIIADMCMQKVQFSWLFFAGAIPVFFSFFIVTLLCHYNNWDPVMVGVRRVFAFICRKHRIQRVPEDSEQCESLISMHSVSQEDGAT.

2 consecutive transmembrane segments (helical) span residues 69 to 89 (MALG…SSEL) and 101 to 121 (FFST…FIIW). Phosphoserine is present on S207. 8 helical membrane passes run 244 to 264 (ISFF…EALS), 269 to 289 (AIVN…AAVF), 297 to 317 (FTLS…LVNL), 328 to 348 (TIGS…IVMI), 362 to 382 (MFFG…FFLL), 396 to 416 (VVLL…EFLW), 421 to 441 (FLTS…LSII), and 453 to 473 (WLFF…TLLC). The EamA domain maps to 253–317 (FLANLSYQEA…SIGGVVLVNL (65 aa)).

This sequence belongs to the SLC35F solute transporter family.

The protein resides in the membrane. In terms of biological role, putative solute transporter. The sequence is that of Solute carrier family 35 member F5 (Slc35f5) from Mus musculus (Mouse).